Reading from the N-terminus, the 244-residue chain is tRNA pseudouridine synthase A (244 aa).

The Nucleophile role is filled by aspartate 52. Tyrosine 110 is a substrate binding site.

The protein belongs to the tRNA pseudouridine synthase TruA family. As to quaternary structure, homodimer.

It carries out the reaction uridine(38/39/40) in tRNA = pseudouridine(38/39/40) in tRNA. Formation of pseudouridine at positions 38, 39 and 40 in the anticodon stem and loop of transfer RNAs. This chain is tRNA pseudouridine synthase A, found in Clostridium botulinum (strain Alaska E43 / Type E3).